We begin with the raw amino-acid sequence, 146 residues long: Cytochrome b5 type B (146 aa).

Residues 1-11 (MATPEASGSGE) constitute a propeptide that is removed on maturation. Position 19 is a phosphoserine (Ser-19). A Cytochrome b5 heme-binding domain is found at 20–96 (VTYYRLEEVA…LKQYYIGDVH (77 aa)). Lys-30 carries the post-translational modification N6-acetyllysine. At Ser-33 the chain carries Phosphoserine. Heme is bound by residues His-55 and His-79. A Phosphoserine modification is found at Ser-80. The chain crosses the membrane as a helical span at residues 119–136 (WAYWFVPIVGAILIGFLY).

This sequence belongs to the cytochrome b5 family. In terms of assembly, component of a complex composed of cytochrome b5, NADH-cytochrome b5 reductase (CYB5R3) and MTARC2.

The protein localises to the mitochondrion outer membrane. Its function is as follows. Cytochrome b5 is a membrane-bound hemoprotein functioning as an electron carrier for several membrane-bound oxygenases. This chain is Cytochrome b5 type B (Cyb5b), found in Mus musculus (Mouse).